The primary structure comprises 570 residues: Urease subunit alpha (570 aa).

The Urease domain maps to 133–570 (GGIDNHIHYI…LPLAQLYNLF (438 aa)). Ni(2+) contacts are provided by His138, His140, and Lys221. Lys221 carries the post-translational modification N6-carboxylysine. His223 lines the substrate pocket. Ni(2+) is bound by residues His250 and His276. His324 acts as the Proton donor in catalysis. Residue Asp364 participates in Ni(2+) binding.

This sequence belongs to the metallo-dependent hydrolases superfamily. Urease alpha subunit family. As to quaternary structure, heterotrimer of UreA (gamma), UreB (beta) and UreC (alpha) subunits. Three heterotrimers associate to form the active enzyme. Ni cation is required as a cofactor. In terms of processing, carboxylation allows a single lysine to coordinate two nickel ions.

It is found in the cytoplasm. It carries out the reaction urea + 2 H2O + H(+) = hydrogencarbonate + 2 NH4(+). Its pathway is nitrogen metabolism; urea degradation; CO(2) and NH(3) from urea (urease route): step 1/1. The chain is Urease subunit alpha from Cytophaga hutchinsonii (strain ATCC 33406 / DSM 1761 / CIP 103989 / NBRC 15051 / NCIMB 9469 / D465).